Reading from the N-terminus, the 124-residue chain is Ribosome-binding factor A (124 aa).

Belongs to the RbfA family. In terms of assembly, monomer. Binds 30S ribosomal subunits, but not 50S ribosomal subunits or 70S ribosomes.

It localises to the cytoplasm. One of several proteins that assist in the late maturation steps of the functional core of the 30S ribosomal subunit. Associates with free 30S ribosomal subunits (but not with 30S subunits that are part of 70S ribosomes or polysomes). Required for efficient processing of 16S rRNA. May interact with the 5'-terminal helix region of 16S rRNA. In Buchnera aphidicola subsp. Schizaphis graminum (strain Sg), this protein is Ribosome-binding factor A.